Consider the following 313-residue polypeptide: Probable RuBisCO transcriptional regulator (313 aa).

Positions 6 to 63 (FTLDQLLILKAIAAQGSFKKAADSLYISQPAVSMQVQNIEKQLNVQLLDRGGRRANLT) constitute an HTH lysR-type domain. A DNA-binding region (H-T-H motif) is located at residues 23–42 (FKKAADSLYISQPAVSMQVQ).

Belongs to the LysR transcriptional regulatory family.

It localises to the plastid. Its subcellular location is the chloroplast. Its function is as follows. Trans-acting transcriptional regulator of RuBisCO genes (rbcL and rbcS) expression. This Chlorokybus atmophyticus (Soil alga) protein is Probable RuBisCO transcriptional regulator (rbcR).